Consider the following 376-residue polypeptide: Transcription factor Sp6 (376 aa).

The disordered stretch occupies residues 1-70 (MLTAVCGSLG…VDFSQGYELP (70 aa)). A 9aaTAD motif is present at residues 118–126 (GSWWDLHPG). The segment at 167-223 (HPHAHHLLPAAGGQHLLGPPDGAKALEVAAPESQGLDSSLDGAARPKGSRRSVPRSS) is disordered. A compositionally biased stretch (low complexity) spans 173 to 186 (LLPAAGGQHLLGPP). 3 C2H2-type zinc fingers span residues 254–278 (HNCH…LRWH), 284–308 (FVCN…LQTH), and 314–336 (FPCA…MKTH). A compositionally biased stretch (basic and acidic residues) spans 333–343 (MKTHEGAKEEA). Residues 333-376 (MKTHEGAKEEAAGAASGEGKAGGAVEPPGGKGKREAEGSVAPSN) are disordered.

Belongs to the Sp1 C2H2-type zinc-finger protein family. Ubiquitous.

Its subcellular location is the nucleus. In terms of biological role, promotes cell proliferation. Plays a role in tooth germ growth. Plays a role in the control of enamel mineralization. Binds the AMBN promoter. The sequence is that of Transcription factor Sp6 (SP6) from Homo sapiens (Human).